The following is a 150-amino-acid chain: UPF0178 protein Daro_2879 (150 aa).

It belongs to the UPF0178 family.

The chain is UPF0178 protein Daro_2879 from Dechloromonas aromatica (strain RCB).